We begin with the raw amino-acid sequence, 249 residues long: 2,3-bisphosphoglycerate-dependent phosphoglycerate mutase (249 aa).

Substrate is bound by residues 9-16, 22-23, Arg61, 88-91, Lys99, 115-116, and 184-185; these read RHGQSQWN, TG, ERHY, RR, and GN. Catalysis depends on His10, which acts as the Tele-phosphohistidine intermediate. The Proton donor/acceptor role is filled by Glu88.

It belongs to the phosphoglycerate mutase family. BPG-dependent PGAM subfamily. Homodimer.

It catalyses the reaction (2R)-2-phosphoglycerate = (2R)-3-phosphoglycerate. The protein operates within carbohydrate degradation; glycolysis; pyruvate from D-glyceraldehyde 3-phosphate: step 3/5. Functionally, catalyzes the interconversion of 2-phosphoglycerate and 3-phosphoglycerate. This is 2,3-bisphosphoglycerate-dependent phosphoglycerate mutase from Xanthomonas axonopodis pv. citri (strain 306).